The primary structure comprises 334 residues: MADPAATPKSLSIACVSIKDTFAEAFDMKATRLIVTADDRRWCDESARAMCGFGTSVIACGLEIAVEQTLSPEQTPDGRPGVAILAFGMSGKDLEKQIPRRAGQCVLTCPTTALYGGIPGGREVHPKRVPIGKSLRYFGDGNQISKQIQHLDADGRSRPVRYWRIPVMDGEFVCQHDVGRVDAIGGGNFILVGRTMQSVTIASRAAIDAMRELPGIITPFPGGTTRSGSKVGSKYAALFASTNDSFCPTLREVTPSELPSEANAAIEVVIDGLSFDEIAESMRVGITAACEAGASEGLLSVSAGNYGGKLGRHHFKLHELLADASSASDSGAER.

Belongs to the FTR family. Homotetramer.

It localises to the cytoplasm. The enzyme catalyses N-formylmethanofuran + 5,6,7,8-tetrahydromethanopterin + H(+) = N(5)-formyl-5,6,7,8-tetrahydromethanopterin + methanofuran. It functions in the pathway one-carbon metabolism; formaldehyde degradation; formate from formaldehyde (H(4)MPT route): step 4/5. Functionally, catalyzes the transfer of a formyl group from 5-formyl tetrahydromethanopterin (5-formyl-H(4)MPT) to methanofuran (MFR) to produce formylmethanofuran (formyl-MFR) and tetrahydromethanopterin (H(4)MPT). The sequence is that of Formylmethanofuran--tetrahydromethanopterin formyltransferase from Rhodopirellula baltica (strain DSM 10527 / NCIMB 13988 / SH1).